A 556-amino-acid polypeptide reads, in one-letter code: General transcription factor IIF subunit 1 (556 aa).

Disordered stretches follow at residues 82–128 (TMTS…PAAA) and 226–499 (SRLQ…PFTE). A compositionally biased stretch (low complexity) spans 84-128 (TSAPNGTNSTGTTPNTTTTTTTTTTTTTTTTTAAGTPGAPNPAAA). Residues 245-275 (SGKKSIEELEEAEHRNRNEDPNRYKTTNEEK) are compositionally biased toward basic and acidic residues. Composition is skewed to acidic residues over residues 291 to 338 (GNGE…DVDL) and 378 to 394 (GDDEDDDEDDEDPDQDD). Basic and acidic residues-rich tracts occupy residues 415–427 (VKKEDDGGKDSKS) and 450–461 (NKSDSSVDNRES). Residues 469–492 (SSPQAVQPNSPSQQQQQQQQNIDP) are compositionally biased toward low complexity.

This sequence belongs to the TFIIF alpha subunit family. As to quaternary structure, heterodimer of an alpha and a beta subunit.

The protein localises to the nucleus. Its function is as follows. TFIIF is a general transcription initiation factor that binds to RNA polymerase II and helps to recruit it to the initiation complex in collaboration with TFIIB. It promotes transcription elongation. The polypeptide is General transcription factor IIF subunit 1 (gtf2f1) (Dictyostelium discoideum (Social amoeba)).